A 393-amino-acid polypeptide reads, in one-letter code: Branched-chain-amino-acid aminotransferase, mitochondrial (393 aa).

The transit peptide at 1 to 16 (MLQRHSLKLGKFSIRT) directs the protein to the mitochondrion. Lys219 carries the post-translational modification N6-(pyridoxal phosphate)lysine. Position 315 is a phosphothreonine (Thr315).

The protein belongs to the class-IV pyridoxal-phosphate-dependent aminotransferase family. Pyridoxal 5'-phosphate serves as cofactor.

It localises to the mitochondrion matrix. The catalysed reaction is L-leucine + 2-oxoglutarate = 4-methyl-2-oxopentanoate + L-glutamate. It catalyses the reaction L-isoleucine + 2-oxoglutarate = (S)-3-methyl-2-oxopentanoate + L-glutamate. The enzyme catalyses L-valine + 2-oxoglutarate = 3-methyl-2-oxobutanoate + L-glutamate. It carries out the reaction a 2-oxocarboxylate + L-methionine = 4-methylsulfanyl-2-oxobutanoate + an L-alpha-amino acid. It functions in the pathway amino-acid biosynthesis; L-isoleucine biosynthesis; L-isoleucine from 2-oxobutanoate: step 4/4. It participates in amino-acid biosynthesis; L-leucine biosynthesis; L-leucine from 3-methyl-2-oxobutanoate: step 4/4. The protein operates within amino-acid biosynthesis; L-valine biosynthesis; L-valine from pyruvate: step 4/4. Its pathway is amino-acid biosynthesis; L-methionine biosynthesis via salvage pathway; L-methionine from S-methyl-5-thio-alpha-D-ribose 1-phosphate: step 6/6. Functionally, mitochondrial isozyme of branched-chain-amino-acid aminotransferase, involved in the biosynthesis of the branched chain amino acids (BCAAs) leucine, isoleucine, and valine. Catalyzes the formation of methionine from 2-keto-4-methylthiobutyrate (KMTB) in the methionine salvage pathway primarily using BCAAs (leucine, isoleucine, and valine) as the amino donors. Appears to be involved in the regulation of the cell cycle, although this may be indirect via metabolic changes. Connects BCAAs and TCA-cycle metabolism governing TCA-cycle flux to activate TORC1 signaling. High copy suppressor of a temperature-sensitive mutation in the ABC transporter, ATM1. The protein is Branched-chain-amino-acid aminotransferase, mitochondrial of Saccharomyces cerevisiae (strain ATCC 204508 / S288c) (Baker's yeast).